The chain runs to 173 residues: Photosystem I assembly protein Ycf3 (173 aa).

TPR repeat units follow at residues 35-68 (AFAYYRDGMSAQADGEYSEALENYEEALRLEDDP), 72-105 (SYILYNMGLIYASNGDHHKALELYHEAIDLNPRM), and 120-153 (GEKAKQSGNEDESEALFDKAAEYWKQAIRIAPNN).

This sequence belongs to the Ycf3 family.

It is found in the cellular thylakoid membrane. Its function is as follows. Essential for the assembly of the photosystem I (PSI) complex. May act as a chaperone-like factor to guide the assembly of the PSI subunits. The chain is Photosystem I assembly protein Ycf3 from Picosynechococcus sp. (strain ATCC 27264 / PCC 7002 / PR-6) (Agmenellum quadruplicatum).